A 324-amino-acid chain; its full sequence is Probable WRKY transcription factor 53 (324 aa).

The interval 93–126 (NPGSVPESPASINGSPRSEEFADGGGSSESHHRQ) is disordered. A DNA-binding region (WRKY) is located at residues 152–220 (GLEGPQDDVF…YRGTHTCSQA (69 aa)).

The protein belongs to the WRKY group III family. In terms of assembly, interacts with ESR/ESP and UPL5. Binds to WRKY30. In terms of processing, ubiquitinated by UPL5. Ubiquitination leads to its subsequent degradation, thus controlling the timing of leaf senescence.

The protein localises to the nucleus. Transcription factor. Interacts specifically with the W box (5'-(T)TGAC[CT]-3'), a frequently occurring elicitor-responsive cis-acting element. May regulate the early events of leaf senescence. Negatively regulates the expression of ESR/ESP. Together with WRKY46 and WRKY70, promotes resistance to P.syringae, probably by enhancing salicylic acid (SA)- dependent genes. Contributes to the suppression of jasmonic acid (MeJA)-induced expression of PDF1.2. This Arabidopsis thaliana (Mouse-ear cress) protein is Probable WRKY transcription factor 53.